The following is a 1053-amino-acid chain: Serine/threonine-protein phosphatase 6 regulatory ankyrin repeat subunit A (1053 aa).

ANK repeat units follow at residues 40 to 69, 73 to 102, 106 to 135, 139 to 168, 172 to 201, 205 to 234, 238 to 267, 271 to 301, 305 to 334, 338 to 367, 371 to 400, 404 to 433, 437 to 466, 470 to 500, 504 to 534, 549 to 578, 582 to 611, 616 to 645, 652 to 681, 685 to 714, 718 to 747, 755 to 784, 787 to 817, 822 to 851, 855 to 885, 889 to 918, and 925 to 954; these read EKRT…RVNA, KWLT…DVNA, NWQT…NVNV, AGRT…NINA, KDRR…EVTC, KSYT…DMNE, YGNT…IVNQ, KGFT…DVNM, DGKT…VIDC, NGNT…DTAK, HGMF…DIDT, FGRT…DFNK, FGRS…SVND, RGCT…NPGI, QGYN…DVLM, ATIS…DLDV, SGRT…SILV, LKRT…PQNA, NGQT…NVDA, WGRT…KCLL, RGRT…SMDA, HGYT…FQKT, NAFS…SIVN, KGRT…QVNS, TGKT…ELTL, SKNT…DRNL, and ALQT…SVLA. A phosphoserine mark is found at serine 1007 and serine 1011.

In terms of assembly, protein phosphatase 6 (PP6) holoenzyme is proposed to be a heterotrimeric complex formed by the catalytic subunit, a SAPS domain-containing subunit (PP6R) and an ankyrin repeat-domain containing regulatory subunit (ARS). Interacts with PPP6C, PPP6R1 and PPP6R3. Interacts with PPP1C and HNRPK. Ubiquitinated by the ECS(RAB40C) complex leading to its degradation and decreased PP6 activity.

The protein resides in the nucleus. It is found in the nucleoplasm. The protein localises to the cytoplasm. It localises to the cytosol. Its subcellular location is the cell projection. The protein resides in the lamellipodium. Functionally, regulatory subunit of protein phosphatase 6 (PP6) that may be involved in the recognition of phosphoprotein substrates. Involved in the PP6-mediated dephosphorylation of NFKBIE opposing its degradation in response to TNF-alpha. Selectively inhibits the phosphatase activity of PPP1C. Targets PPP1C to modulate HNRPK phosphorylation. Involved in the PP6-mediated dephosphorylation of MOB1 and induced focal adhesion assembly during cell migration. The polypeptide is Serine/threonine-protein phosphatase 6 regulatory ankyrin repeat subunit A (Homo sapiens (Human)).